The primary structure comprises 417 residues: NADH-quinone oxidoreductase subunit D (417 aa).

The protein belongs to the complex I 49 kDa subunit family. As to quaternary structure, NDH-1 is composed of 14 different subunits. Subunits NuoB, C, D, E, F, and G constitute the peripheral sector of the complex.

It is found in the cell inner membrane. It catalyses the reaction a quinone + NADH + 5 H(+)(in) = a quinol + NAD(+) + 4 H(+)(out). In terms of biological role, NDH-1 shuttles electrons from NADH, via FMN and iron-sulfur (Fe-S) centers, to quinones in the respiratory chain. The immediate electron acceptor for the enzyme in this species is believed to be ubiquinone. Couples the redox reaction to proton translocation (for every two electrons transferred, four hydrogen ions are translocated across the cytoplasmic membrane), and thus conserves the redox energy in a proton gradient. This is NADH-quinone oxidoreductase subunit D from Herminiimonas arsenicoxydans.